Here is a 473-residue protein sequence, read N- to C-terminus: Photosystem II CP43 reaction center protein (473 aa).

The propeptide occupies 1–14 (MKTLYSLRRSYPVE). An N-acetylthreonine modification is found at Thr-15. Thr-15 is modified (phosphothreonine). 5 consecutive transmembrane segments (helical) span residues 69–93 (LFEV…PHLA), 134–155 (LIGP…KDRN), 178–200 (KALY…RKIT), 255–275 (KPFA…LSYS), and 291–312 (WFNN…ASQA). Glu-367 is a [CaMn4O5] cluster binding site. A helical transmembrane segment spans residues 447–471 (RARAAAAGFEKGIDRDFEPVLSMTP).

The protein belongs to the PsbB/PsbC family. PsbC subfamily. In terms of assembly, PSII is composed of 1 copy each of membrane proteins PsbA, PsbB, PsbC, PsbD, PsbE, PsbF, PsbH, PsbI, PsbJ, PsbK, PsbL, PsbM, PsbT, PsbX, PsbY, PsbZ, Psb30/Ycf12, at least 3 peripheral proteins of the oxygen-evolving complex and a large number of cofactors. It forms dimeric complexes. Binds multiple chlorophylls and provides some of the ligands for the Ca-4Mn-5O cluster of the oxygen-evolving complex. It may also provide a ligand for a Cl- that is required for oxygen evolution. PSII binds additional chlorophylls, carotenoids and specific lipids. serves as cofactor.

The protein localises to the plastid. It localises to the chloroplast thylakoid membrane. Its function is as follows. One of the components of the core complex of photosystem II (PSII). It binds chlorophyll and helps catalyze the primary light-induced photochemical processes of PSII. PSII is a light-driven water:plastoquinone oxidoreductase, using light energy to abstract electrons from H(2)O, generating O(2) and a proton gradient subsequently used for ATP formation. The sequence is that of Photosystem II CP43 reaction center protein from Pinus thunbergii (Japanese black pine).